Consider the following 209-residue polypeptide: PRA1 family protein B1 (209 aa).

An N-acetylalanine modification is found at Ala-2. 5 helical membrane passes run 73–93 (LAYFKVNYVAIVSLVLAFSLF), 95–115 (HPLSLLVLIGLLGGWMFLYLF), 133–153 (ETLLALVLSTIVVVFMTSVGS), 154–174 (LLTSALMIGVAIVCVHGAFVV), and 185–205 (PANAGLLSFLGGSATSAAAAV).

Belongs to the PRA1 family. In terms of assembly, can form homodimer. Interacts with PRA1B2, PRA1B3, PRA1B4, PRA1B5, PRA1B6 and PRA1E.

Its subcellular location is the endosome membrane. In terms of biological role, may be involved in both secretory and endocytic intracellular trafficking in the endosomal/prevacuolar compartments. The protein is PRA1 family protein B1 (PRA1B1) of Arabidopsis thaliana (Mouse-ear cress).